The primary structure comprises 278 residues: Cytoplasmic envelopment protein 1 (278 aa).

The protein belongs to the herpesviridae cytoplasmic envelopment protein 1 family.

The protein localises to the virion. Its subcellular location is the virion tegument. The protein resides in the host cytoplasm. It is found in the host Golgi apparatus. Functionally, plays a critical role in cytoplasmic virus egress. Participates in the final step of tegumentation and envelope acquisition within the host cytoplasm. This is Cytoplasmic envelopment protein 1 (ORF42) from Homo sapiens (Human).